We begin with the raw amino-acid sequence, 970 residues long: Polycystin-2 (970 aa).

The span at 1-11 (MVNSSRVQPQQ) shows a compositional bias: polar residues. Residues 1-182 (MVNSSRVQPQ…GDPLHRHLPL (182 aa)) are disordered. At 1–221 (MVNSSRVQPQ…STDREKYLKS (221 aa)) the chain is on the cytoplasmic side. Low complexity predominate over residues 25-45 (GPGRLMAGGAIAGAGLAAPGG). Over residues 47–60 (REQRGLEIEMERIR) the composition is skewed to basic and acidic residues. Over residues 62 to 83 (AAARDPPAGASASPSPPLSSCS) the composition is skewed to low complexity. Phosphoserine occurs at positions 76 and 80. Over residues 95–109 (EAEEEEEEEEVEGEE) the composition is skewed to acidic residues. Positions 125–138 (RRSASSSAVSSAGA) are enriched in low complexity. The residue at position 139 (Arg139) is an Omega-N-methylarginine. Residues 139-148 (RGRGLGGYHG) are compositionally biased toward gly residues. Residues 222–243 (VLRELATYLLFLIVLCILTYGM) form a helical membrane-spanning segment. At 244–470 (MSSSVYYYTR…PVKLIRYVTT (227 aa)) the chain is on the extracellular side. N-linked (GlcNAc...) asparagine glycans are attached at residues Asn301, Asn307, and Asn330. Residues Cys333 and Cys346 are joined by a disulfide bond. Residues Asn364 and Asn377 are each glycosylated (N-linked (GlcNAc...) asparagine). A helical membrane pass occupies residues 471 to 491 (FDFFLAACEIIFCLFILYYVV). Over 492-507 (EEILEIRIHKLHYFRS) the chain is Cytoplasmic. A helical membrane pass occupies residues 508–528 (FWNCLDVVIIVLSVVAIGINI). At 529–554 (YRTSNVEALLQFLEDQNTFPNFENLA) the chain is on the extracellular side. Residues 555–575 (YWQTQFNNIAAVIVFFVWIKL) form a helical membrane-spanning segment. Gln559 contacts cholesterol. Residues 576 to 599 (FKFINFNRTMSQLSTTMSRCAKDL) are Cytoplasmic-facing. The helical transmembrane segment at 600-621 (FGFAIMFFIIFLAYAQLAYLVF) threads the bilayer. Over 622-633 (GTQVDDFSTFQE) the chain is Extracellular. An intramembrane region (pore-forming) is located at residues 634 to 648 (CIFTQFRIILGDINF). Position 643 (Leu643) interacts with Ca(2+). The short motif at 643 to 645 (LGD) is the Selectivity filter element. Over 649-656 (AEIEEANR) the chain is Extracellular. Residues 657-677 (VLGPIYFTTFVFFMFFILLNM) traverse the membrane as a helical segment. Residues 678-970 (FLAIINDTYS…GGNGSANIHV (293 aa)) are Cytoplasmic-facing. Positions 750–785 (KGHTDAEIEAIFTKYDQDGDQELTEHEHQQMRDDLE) constitute an EF-hand domain. Ca(2+) is bound by residues Asp765, Asp767, Asp769, Glu771, and Glu776. The segment at 766–833 (QDGDQELTEH…HSSRRRGSIS (68 aa)) is disordered. Positions 772 to 797 (LTEHEHQQMRDDLEKEREDLDLDHSS) are enriched in basic and acidic residues. Over residues 798–809 (LPRPMSSRSFPR) the composition is skewed to low complexity. Ser803, Ser810, Ser814, and Ser831 each carry phosphoserine. The interval 805–824 (RSFPRSLDDSEEEDDDDSGH) is linker. The important for interaction with PACS1 and PACS2 stretch occupies residues 812–823 (DDSEEEDDDDSG). A coiled-coil region spans residues 835–874 (GVSYEEFQVLVRRVDRMEHSIGSIVSKIDAVIVKLEIMER). A disordered region spans residues 921–970 (DDAASQISHGLGTPLGLNGQPRPRSSRPSSSQSTEGMEGGGGNGSANIHV). Positions 940-956 (QPRPRSSRPSSSQSTEG) are enriched in low complexity.

The protein belongs to the polycystin family. As to quaternary structure, homotetramer. Component of the heterotetrameric polycystin channel complex with PKD1; the tetramer contains one PKD1 chain and three PKD2 chains. Isoform 1 interacts with PKD1 while isoform 3 does not. Interacts with PKD1L1; probably forms a Ca(2+) channel. Interacts with CD2AP. Interacts with HAX1. Interacts with NEK8. Part of a complex containing AKAP5, ADCY5, ADCY6 and PDE4C. Interacts (via C-terminus) with TRPV4 (via C-terminus). Interacts (via C-terminal acidic region) with PACS1 and PACS2; these interactions retain the protein in the endoplasmic reticulum and prevent trafficking to the cell membrane. Interacts with TMEM33. Form a heterotetramer with TRPC1 with a 2:2 stoichiometry; has distinct channel properties separate from PKD2 or TRPC1 homomers alone. Interacts with TMEM120A; TMEM120A inhibits PKD2 channel activity through the physical association of PKD2 with TMEM120A. Interacts (via N-terminus) with RYR2; regulates RYR2 channel activity. N-glycosylated. The four subunits in a tetramer probably differ in the extent of glycosylation; simultaneous glycosylation of all experimentally validated sites would probably create steric hindrance. In terms of processing, phosphorylated. Phosphorylation is important for protein function; a mutant that lacks the N-terminal phosphorylation sites cannot complement a zebrafish pkd2-deficient mutant. PKD-mediated phosphorylation at the C-terminus regulates its function in the release of Ca(2+) stores from the endoplasmic reticulum. Phosphorylation at Ser-814 regulates PKD2 trafficking. Phosphorylation at Ser-76 is required for PKD2 trafficking to or retention at the lateral plasma membrane. Phosphorylation at Ser-803, Ser-814 and Ser-831 regulates PKD2 channel activity. Post-translationally, sumoylated by SUMO1; sumoylation regulates PKD2 membrane recycling and is necessary for intravascular pressure-induced arterial contractility. In terms of tissue distribution, expressed in mesenchymally derived structures in the developing embryo at day 12.5. In adult, mostly expressed in kidney.

The protein localises to the cell projection. It localises to the cilium membrane. It is found in the endoplasmic reticulum membrane. Its subcellular location is the cell membrane. The protein resides in the basolateral cell membrane. The protein localises to the cytoplasmic vesicle membrane. It localises to the golgi apparatus. It is found in the vesicle. Its subcellular location is the secreted. The protein resides in the extracellular exosome. It catalyses the reaction K(+)(in) = K(+)(out). The catalysed reaction is Na(+)(in) = Na(+)(out). It carries out the reaction Ca(2+)(in) = Ca(2+)(out). Its activity is regulated as follows. Channel activity is regulated by phosphorylation. Channel activity is regulated by intracellular Ca(2+). At the endoplasmic reticulum membrane (ER), TMEM33 enhances its channel activity. TMEM120A inhibits the channel activity of PKD2, and mediates mechanosensitivity of the PKD2-TMEM120A channel complex. PKD1/PKD2 complex on the plasma membrane is activated by PKD1 N-terminus. Its function is as follows. Forms a nonselective cation channel. Can function as a homotetrameric ion channel or can form heteromer with PKD1. Displays distinct function depending on its subcellular localization and regulation by its binding partners. Functions as a cation channel, with a preference for monovalent cations over divalent cations that allows K(+), Na(+) and Ca(2+) influx, with low selectivity for Ca(2+). Involved in fluid-flow mechanosensation in the primary cilium in renal epithelium. In the endoplasmic reticulum, likely functions as a K(+) channel to facilitate Ca(2+) release. The heterotetrameric PKD1/PKD2 channel has higher Ca(2+) permeability than homomeric PKD2 channel and acts as a primarily Ca(2+)-permeable channel. Interacts with and acts as a regulator of a number of other channels, such as TRPV4, TRPC1, IP3R, RYR2, ultimately further affecting intracellular signaling, to modulate intracellular Ca(2+) signaling. Together with TRPV4, forms mechano- and thermosensitive channels in cilium. In cardiomyocytes, PKD2 modulates Ca(2+) release from stimulated RYR2 receptors through direct association. Also involved in left-right axis specification via its role in sensing nodal flow; forms a complex with PKD1L1 in cilia to facilitate flow detection in left-right patterning. Acts as a regulator of cilium length together with PKD1. Mediates systemic blood pressure and contributes to the myogenic response in cerebral arteries though vasoconstriction. The sequence is that of Polycystin-2 from Bos taurus (Bovine).